A 127-amino-acid chain; its full sequence is uncharacterized protein (127 aa).

This is an uncharacterized protein from Methanocaldococcus jannaschii (strain ATCC 43067 / DSM 2661 / JAL-1 / JCM 10045 / NBRC 100440) (Methanococcus jannaschii).